A 199-amino-acid polypeptide reads, in one-letter code: Prostatic spermine-binding protein (199 aa).

An N-terminal signal peptide occupies residues 1–18; that stretch reads MLLLLTLAFLASPTCRAQ. A Jacalin-type lectin domain is found at 19–151; it reads NVLGNAAGKY…VRGIGFKWGN (133 aa). Residue Asn-62 is glycosylated (N-linked (GlcNAc...) asparagine). Positions 159–199 are disordered; the sequence is HYNNKEDKADNKDADNKDADNKDDGDEDDDGNDDDDQKDES. The segment covering 160–180 has biased composition (basic and acidic residues); it reads YNNKEDKADNKDADNKDADNK. The span at 181–199 shows a compositional bias: acidic residues; that stretch reads DDGDEDDDGNDDDDQKDES.

This sequence to rat SBP. Prostate.

In terms of biological role, this protein seems to be functional equivalent to rat prostatic spermine-binding protein, which is involved in polyamine binding. This is Prostatic spermine-binding protein (Sbp) from Mus musculus (Mouse).